The primary structure comprises 522 residues: Peptide chain release factor 3 (522 aa).

Residues 10–277 form the tr-type G domain; the sequence is ASRKTFAIIS…TFVDFAPSPS (268 aa). GTP-binding positions include 19–26, 87–91, and 141–144; these read SHPDAGKT, DTPGH, and NKMD.

It belongs to the TRAFAC class translation factor GTPase superfamily. Classic translation factor GTPase family. PrfC subfamily.

Its subcellular location is the cytoplasm. Functionally, increases the formation of ribosomal termination complexes and stimulates activities of RF-1 and RF-2. It binds guanine nucleotides and has strong preference for UGA stop codons. It may interact directly with the ribosome. The stimulation of RF-1 and RF-2 is significantly reduced by GTP and GDP, but not by GMP. The chain is Peptide chain release factor 3 from Listeria monocytogenes serotype 4b (strain F2365).